A 216-amino-acid polypeptide reads, in one-letter code: Redox-sensing transcriptional repressor Rex 1 (216 aa).

A DNA-binding region (H-T-H motif) is located at residues 16 to 55; sequence LYYRYLRMLHDTGKNKVSSTELSEAVQVDSATIRRDFSYF. 90–95 serves as a coordination point for NAD(+); the sequence is GVGNLG.

This sequence belongs to the transcriptional regulatory Rex family. In terms of assembly, homodimer.

The protein localises to the cytoplasm. Its function is as follows. Modulates transcription in response to changes in cellular NADH/NAD(+) redox state. This is Redox-sensing transcriptional repressor Rex 1 from Enterococcus faecalis (strain ATCC 700802 / V583).